Here is a 209-residue protein sequence, read N- to C-terminus: Large ribosomal subunit protein uL3 (209 aa).

The segment at 128-156 (FAGGSRTHGQSDRLRAPGSVGGSSDPSRT) is disordered.

The protein belongs to the universal ribosomal protein uL3 family. As to quaternary structure, part of the 50S ribosomal subunit. Forms a cluster with proteins L14 and L19.

Its function is as follows. One of the primary rRNA binding proteins, it binds directly near the 3'-end of the 23S rRNA, where it nucleates assembly of the 50S subunit. The chain is Large ribosomal subunit protein uL3 from Prosthecochloris aestuarii (strain DSM 271 / SK 413).